The sequence spans 254 residues: Alcohol dehydrogenase 2 (254 aa).

10-33 (FVAGLGGIGFDTSREIVKSGPKNL) contacts NAD(+). Residue S138 participates in substrate binding. Catalysis depends on Y151, which acts as the Proton acceptor.

This sequence belongs to the short-chain dehydrogenases/reductases (SDR) family. Homodimer.

It catalyses the reaction a primary alcohol + NAD(+) = an aldehyde + NADH + H(+). The enzyme catalyses a secondary alcohol + NAD(+) = a ketone + NADH + H(+). The protein is Alcohol dehydrogenase 2 (Adh2) of Drosophila wheeleri (Fruit fly).